Consider the following 362-residue polypeptide: Phospho-N-acetylmuramoyl-pentapeptide-transferase (362 aa).

A run of 10 helical transmembrane segments spans residues 21-41, 75-95, 100-120, 136-156, 170-190, 201-221, 225-245, 247-267, 290-310, and 339-359; these read YITF…FLLG, TMGG…WADL, VWAV…DDFL, LVVQ…LMPG, LMIP…MGAS, GLAI…AYLV, IFSH…AVFC, ALIG…AVFM, IVLA…IVQV, and TVVI…LATL.

It belongs to the glycosyltransferase 4 family. MraY subfamily. The cofactor is Mg(2+).

The protein resides in the cell inner membrane. The catalysed reaction is UDP-N-acetyl-alpha-D-muramoyl-L-alanyl-gamma-D-glutamyl-meso-2,6-diaminopimeloyl-D-alanyl-D-alanine + di-trans,octa-cis-undecaprenyl phosphate = di-trans,octa-cis-undecaprenyl diphospho-N-acetyl-alpha-D-muramoyl-L-alanyl-D-glutamyl-meso-2,6-diaminopimeloyl-D-alanyl-D-alanine + UMP. It functions in the pathway cell wall biogenesis; peptidoglycan biosynthesis. In terms of biological role, catalyzes the initial step of the lipid cycle reactions in the biosynthesis of the cell wall peptidoglycan: transfers peptidoglycan precursor phospho-MurNAc-pentapeptide from UDP-MurNAc-pentapeptide onto the lipid carrier undecaprenyl phosphate, yielding undecaprenyl-pyrophosphoryl-MurNAc-pentapeptide, known as lipid I. This Acidiphilium cryptum (strain JF-5) protein is Phospho-N-acetylmuramoyl-pentapeptide-transferase.